The following is a 259-amino-acid chain: Global transcriptional regulator CodY (259 aa).

Positions Met1–Leu155 are GAF domain. The H-T-H motif DNA-binding region spans Ala203 to Arg222. The residue at position 215 (Ser215) is a Phosphoserine.

It belongs to the CodY family.

The protein resides in the cytoplasm. Its function is as follows. DNA-binding global transcriptional regulator which is involved in the adaptive response to starvation and acts by directly or indirectly controlling the expression of numerous genes in response to nutrient availability. During rapid exponential growth, CodY is highly active and represses genes whose products allow adaptation to nutrient depletion. In Bacillus pumilus (strain SAFR-032), this protein is Global transcriptional regulator CodY.